Consider the following 469-residue polypeptide: Ribulose bisphosphate carboxylase large chain (469 aa).

At K8 the chain carries N6,N6,N6-trimethyllysine. Substrate contacts are provided by N117 and T167. The active-site Proton acceptor is K169. A substrate-binding site is contributed by K171. Mg(2+)-binding residues include K195, D197, and E198. Position 195 is an N6-carboxylysine (K195). H288 serves as the catalytic Proton acceptor. 3 residues coordinate substrate: R289, H321, and S373.

Belongs to the RuBisCO large chain family. Type I subfamily. As to quaternary structure, heterohexadecamer of 8 large chains and 8 small chains; disulfide-linked. The disulfide link is formed within the large subunit homodimers. The cofactor is Mg(2+). Post-translationally, the disulfide bond which can form in the large chain dimeric partners within the hexadecamer appears to be associated with oxidative stress and protein turnover.

It is found in the plastid. The protein resides in the chloroplast. The enzyme catalyses 2 (2R)-3-phosphoglycerate + 2 H(+) = D-ribulose 1,5-bisphosphate + CO2 + H2O. It carries out the reaction D-ribulose 1,5-bisphosphate + O2 = 2-phosphoglycolate + (2R)-3-phosphoglycerate + 2 H(+). Its function is as follows. RuBisCO catalyzes two reactions: the carboxylation of D-ribulose 1,5-bisphosphate, the primary event in carbon dioxide fixation, as well as the oxidative fragmentation of the pentose substrate in the photorespiration process. Both reactions occur simultaneously and in competition at the same active site. The sequence is that of Ribulose bisphosphate carboxylase large chain from Persicaria senticosa (Knotweed).